The sequence spans 1057 residues: Hemophilin receptor (1057 aa).

One can recognise a TBDR plug domain in the interval 168–285; sequence KVYDANRSSV…VGGAVVVKTL (118 aa). The TBDR beta-barrel domain occupies 296-1057; it reads SFGAELKVEG…TMKISWTTKF (762 aa).

It belongs to the TonB-dependent receptor family.

It localises to the cell outer membrane. Its function is as follows. Part of a high affinity heme acquisition system. Functions as a gateway for heme entry into the bacterial cell, enabling growth on hemoprotein sources. Can acquire heme directly from hemoprotein reservoirs, however, HphA likely enhances the efficiency of this process by delivering heme to HphR. Is essential for virulence, bacterial dissemination and growth in the blood. The sequence is that of Hemophilin receptor from Acinetobacter baumannii.